The following is a 604-amino-acid chain: Procollagen galactosyltransferase 1 (604 aa).

The N-terminal stretch at 1 to 18 (MHLLCFFFLLLWTGPARS) is a signal peptide. Residues asparagine 78, asparagine 166, asparagine 363, and asparagine 561 are each glycosylated (N-linked (GlcNAc...) asparagine). Positions 570 to 580 (RARSRKSREQE) are enriched in basic and acidic residues. The interval 570–604 (RARSRKSREQEELSSEAQNTDVLQSPLDSTARDEL) is disordered. A compositionally biased stretch (polar residues) spans 584–597 (SEAQNTDVLQSPLD). The Prevents secretion from ER motif lies at 601–604 (RDEL).

Belongs to the glycosyltransferase 25 family.

It is found in the endoplasmic reticulum lumen. The catalysed reaction is (5R)-5-hydroxy-L-lysyl-[collagen] + UDP-alpha-D-galactose = (5R)-5-O-(beta-D-galactosyl)-5-hydroxy-L-lysyl-[collagen] + UDP + H(+). In terms of biological role, beta-galactosyltransferase that transfers beta-galactose to hydroxylysine residues of type I collagen. By acting on collagen glycosylation, facilitates the formation of collagen triple helix. This is Procollagen galactosyltransferase 1 (colgalt1) from Danio rerio (Zebrafish).